Reading from the N-terminus, the 278-residue chain is MKKRMLDVLMLVIGAFFFALAVNLFAIPNDLGEGGVTGITLILYYLFQWSPGVTNFILNAFLLLIGYKFLDGKTTVYTIIAVAANSLFLHLTHGWSIPSDELIINTIFAGVFAGVGIGMIIRVGGTTAGSAILARIANKYLDWNISYALLFFDLIVVFSSYFIIGAEKMMFTIVMLYIGTKVMDFIIEGLNTKKAITVISENKSEIAEQVNTLMDRGVTILSGKGNYTGQSKEILYIVINKQELSMLKKIIRSCDKKAFVIVHDVRDVFGEGFVDISK.

5 helical membrane passes run 8–28, 46–66, 77–97, 101–121, and 145–165; these read VLMLVIGAFFFALAVNLFAIP, LFQWSPGVTNFILNAFLLLIG, YTIIAVAANSLFLHLTHGWSI, ELIINTIFAGVFAGVGIGMII, and ISYALLFFDLIVVFSSYFIIG.

Belongs to the UPF0750 family.

It is found in the cell membrane. The sequence is that of UPF0750 membrane protein YxkD (yxkD) from Bacillus subtilis (strain 168).